Reading from the N-terminus, the 200-residue chain is Pyridoxal 5'-phosphate synthase subunit PdxT (200 aa).

52 to 54 (GES) contributes to the L-glutamine binding site. C84 serves as the catalytic Nucleophile. Residues R116 and 145-146 (IR) each bind L-glutamine. Residues H181 and E183 each act as charge relay system in the active site.

This sequence belongs to the glutaminase PdxT/SNO family. In terms of assembly, in the presence of PdxS, forms a dodecamer of heterodimers. Only shows activity in the heterodimer.

It carries out the reaction aldehydo-D-ribose 5-phosphate + D-glyceraldehyde 3-phosphate + L-glutamine = pyridoxal 5'-phosphate + L-glutamate + phosphate + 3 H2O + H(+). The enzyme catalyses L-glutamine + H2O = L-glutamate + NH4(+). Its pathway is cofactor biosynthesis; pyridoxal 5'-phosphate biosynthesis. Functionally, catalyzes the hydrolysis of glutamine to glutamate and ammonia as part of the biosynthesis of pyridoxal 5'-phosphate. The resulting ammonia molecule is channeled to the active site of PdxS. The sequence is that of Pyridoxal 5'-phosphate synthase subunit PdxT from Sulfurisphaera tokodaii (strain DSM 16993 / JCM 10545 / NBRC 100140 / 7) (Sulfolobus tokodaii).